Here is a 498-residue protein sequence, read N- to C-terminus: U4/U6 small nuclear ribonucleoprotein Prp31 (498 aa).

Coiled-coil stretches lie at residues 84–119 and 180–214; these read EAAP…KYSK and DEEL…MSFI. One can recognise a Nop domain in the interval 214 to 332; sequence IAPNLSIIVG…IERKFDKWQE (119 aa). The disordered stretch occupies residues 333 to 356; the sequence is PPPVKQVKPLPAPLDGQRKKRGGR. Residues 350–363 carry the Nuclear localization signal (NLS) motif; sequence RKKRGGRRYRKMKE.

It belongs to the PRP31 family. In terms of assembly, identified in the spliceosome B complex. Component of the U4/U6-U5 tri-snRNP complex. Component of some MLL1/MLL complex.

Its subcellular location is the nucleus. It localises to the nucleus speckle. The protein localises to the cajal body. Functionally, involved in pre-mRNA splicing as component of the spliceosome. Required for the assembly of the U4/U5/U6 tri-snRNP complex, one of the building blocks of the spliceosome. The protein is U4/U6 small nuclear ribonucleoprotein Prp31 (prpf31) of Xenopus tropicalis (Western clawed frog).